Here is a 203-residue protein sequence, read N- to C-terminus: Putative GPI-anchored protein YHR214W (203 aa).

The N-terminal stretch at 1–23 (MFNRFNKFQAAVALALLSRGALG) is a signal peptide. 2 N-linked (GlcNAc...) asparagine glycosylation sites follow: asparagine 28 and asparagine 138. Asparagine 184 carries GPI-anchor amidated asparagine lipidation. The propeptide at 185 to 203 (AGTFSLSNAILNGGSVSGL) is removed in mature form.

The protein localises to the cell membrane. This is Putative GPI-anchored protein YHR214W from Saccharomyces cerevisiae (strain ATCC 204508 / S288c) (Baker's yeast).